We begin with the raw amino-acid sequence, 824 residues long: Intraflagellar transport protein 88 homolog (824 aa).

Disordered stretches follow at residues 1 to 27 (MENVHLAPETDEDDLYSGFNDYNPAYD) and 111 to 134 (AFDPLGQSRGPAPPLEAKNEDSPE). 11 TPR repeats span residues 196–229 (YSVLFNLASQYSANEMYAEALNTYQVIVKNKMFS), 232–265 (GRLKVNMGNIYLKQRNYSKAIKFYRMALDQIPSV), 271–304 (IKIMQNIGITFIKTGQYSDAINSFEHIMSMAPSL), 415–448 (NDLEINKAITYLRQKDFNQAVDTLKMFEKKDSRV), 450–483 (SAAATNLSFLYYLENEFAQASSYADLAVNSDRYN), 484–517 (PSALTNKGNTVFANGDYEKAAEFYKEALRNDSSC), 518–551 (TEALYNIGLTYKKLNRLDEALDSFLKLHAILRNS), 552–585 (AQVLCQIANIYELMEDPNQAIEWLMQLISVVPTD), 586–619 (SQALSKLGELYDSEGDKSQAFQYYYESYRYFPSN), 620–653 (IEVIEWLGAYYIDTQFCEKAIQYFERASLIQPTQ), and 654–687 (VKWQLMVASCFRRSGNYQKALDTYKEIHRKFPEN). Residues 721–731 (EMREQRIKSGR) are compositionally biased toward basic and acidic residues. The interval 721-824 (EMREQRIKSG…EELGDDLLPE (104 aa)) is disordered. Residues 748–757 (DSGQNNSASS) show a composition bias toward polar residues. A compositionally biased stretch (basic and acidic residues) spans 797–808 (ERPKTAAKKRID). A compositionally biased stretch (acidic residues) spans 809–824 (EDDFADEELGDDLLPE).

Component of the IFT complex B, at least composed of IFT20, IFT22, IFT25, IFT27, IFT46, IFT52, TRAF3IP1/IFT54, IFT57, IFT74, IFT80, IFT81, and IFT88. Interacts with IFT20, IFT22, IFT25, IFT27, IFT52, TRAF3IP1, IFT74, IFT80 and IFT81. Interacts with IFT172. Interacts with IFT57. Interacts with IFT46. Interacts with IFT70B. Interacts with C2CD3. Interacts with ENTR1 (via N-terminus). Interacts with LRRC56. Interacts with DZIP1. Interacts with CCDC38. Interacts with CCDC146. Interacts with CFAP53. In terms of tissue distribution, testis.

It localises to the cytoplasm. It is found in the cytoskeleton. The protein resides in the microtubule organizing center. Its subcellular location is the centrosome. The protein localises to the centriole. It localises to the cilium basal body. It is found in the cell projection. The protein resides in the cilium. Its subcellular location is the flagellum. Functionally, positively regulates primary cilium biogenesis. Also involved in autophagy since it is required for trafficking of ATG16L and the expansion of the autophagic compartment. This chain is Intraflagellar transport protein 88 homolog (Ift88), found in Mus musculus (Mouse).